The primary structure comprises 305 residues: UDP-3-O-acyl-N-acetylglucosamine deacetylase (305 aa).

H79, H238, and D242 together coordinate Zn(2+). H265 serves as the catalytic Proton donor.

It belongs to the LpxC family. It depends on Zn(2+) as a cofactor.

The catalysed reaction is a UDP-3-O-[(3R)-3-hydroxyacyl]-N-acetyl-alpha-D-glucosamine + H2O = a UDP-3-O-[(3R)-3-hydroxyacyl]-alpha-D-glucosamine + acetate. It functions in the pathway glycolipid biosynthesis; lipid IV(A) biosynthesis; lipid IV(A) from (3R)-3-hydroxytetradecanoyl-[acyl-carrier-protein] and UDP-N-acetyl-alpha-D-glucosamine: step 2/6. In terms of biological role, catalyzes the hydrolysis of UDP-3-O-myristoyl-N-acetylglucosamine to form UDP-3-O-myristoylglucosamine and acetate, the committed step in lipid A biosynthesis. This chain is UDP-3-O-acyl-N-acetylglucosamine deacetylase, found in Vibrio vulnificus (strain CMCP6).